We begin with the raw amino-acid sequence, 348 residues long: MSFVDEAKIHVKGGKGGDGCVSFRREKFIEFGGPDGGNGGNGGSVIFVASSAVNTLLYFRYNQHIRAENGKAGSGKGKFGAAGRNRVVEVPVGTQLYDEDGNTLIADLNNIGQQYTVAAGGRGGIGNAQYKSSTNRAPTYFTYGTLGEEHCVLLKLKIVSDVGIIGMPNAGKSSLLSRCTASKTKVSDYPFTTLEPHLGVAYANGCELVLADIPGLIENASSGAGLGHKFLKHIERCVILLHLVDCSLPDIVSAYELVRQELKLHSQELTGKQEVVILNKCDLLSEGEVREKQKLLESSTKKEVITLSMGDELDSLIVFLHAQVKKAVVTEPSDTSFDPFLYVHYNKK.

One can recognise an Obg domain in the interval 1–159; that stretch reads MSFVDEAKIH…HCVLLKLKIV (159 aa). The OBG-type G domain occupies 160-329; that stretch reads SDVGIIGMPN…LHAQVKKAVV (170 aa). GTP contacts are provided by residues 166–173, 191–195, 212–215, 279–282, and 310–312; these read GMPNAGKS, FTTLE, DIPG, NKCD, and GDE. Positions 173 and 193 each coordinate Mg(2+).

Belongs to the TRAFAC class OBG-HflX-like GTPase superfamily. OBG GTPase family. In terms of assembly, monomer. The cofactor is Mg(2+).

It is found in the cytoplasm. Functionally, an essential GTPase which binds GTP, GDP and possibly (p)ppGpp with moderate affinity, with high nucleotide exchange rates and a fairly low GTP hydrolysis rate. Plays a role in control of the cell cycle, stress response, ribosome biogenesis and in those bacteria that undergo differentiation, in morphogenesis control. This Anaplasma marginale (strain Florida) protein is GTPase Obg 1.